We begin with the raw amino-acid sequence, 870 residues long: Leucine--tRNA ligase (870 aa).

A 'HIGH' region motif is present at residues 42–52 (PYPSGKLHMGH). The short motif at 629 to 633 (KMSKS) is the 'KMSKS' region element. Lysine 632 is an ATP binding site.

This sequence belongs to the class-I aminoacyl-tRNA synthetase family.

It is found in the cytoplasm. It catalyses the reaction tRNA(Leu) + L-leucine + ATP = L-leucyl-tRNA(Leu) + AMP + diphosphate. The protein is Leucine--tRNA ligase of Dechloromonas aromatica (strain RCB).